A 1862-amino-acid polypeptide reads, in one-letter code: Ankyrin-1 (1862 aa).

The segment at 1 to 827 (MGFCKADAAT…DELVGSKAER (827 aa)) is 89 kDa domain. 23 ANK repeats span residues 40–69 (NGLNGLHLASKEGHVKMVVELLHKEIILET), 73–102 (KGNTALHIAALAGQDEVVRELVNYGANVNA), 106–135 (KGFTPLYMAAQENHLEVVKFLLENGANQNV), 139–168 (DGFTPLAVALQQGHENVVAHLINYGTKGKV), 170–197 (LPALHIAARNDDTRTAAVLLQNDPNPDV), 201–230 (TGFTPLHIAAHYENLNVAQLLLNRGASVNF), 234–263 (NGITPLHIASRRGNVIMVRLLLDRGAQIET), 267–296 (DELTPLHCAARNGHVRISEILLDHGAPIQA), 300–329 (NGLSPIHMAAQGDHLDCVRLLLQYNAEIDD), 333–362 (DHLTPLHVAAHCGHHRVAKVLLDKGAKPNS), 366–395 (NGFTPLHIACKKNHIRVMELLLKTGASIDA), 399–428 (SGLTPLHVASFMGHLPIVKNLLQRGASPNV), 432–461 (KVETPLHMAARAGHTEVAKYLLQNKAKANA), 465–494 (DDQTPLHCAARIGHTGMVKLLLENGASPNL), 498–527 (AGHTPLHTAAREGHVDTALALLEKEASQAC), 531–560 (KGFTPLHVAAKYGKVRLAELLLEHDAHPNA), 564–593 (NGLTPLHVAVHHNNLDIVKLLLPRGGSPHS), 597–626 (NGYTPLHIAAKQNQIEVARSLLQYGGSANA), 630–659 (QGVTPLHLAAQEGHTEMVALLLSKQANGNL), 663–692 (SGLTPLHLVSQEGHVPVADVLIKHGVTVDA), 696–725 (MGYTPLHVASHYGNIKLVKFLLQHQADVNA), 729–758 (LGYSPLHQAAQQGHTDIVTLLLKNGASPNE), and 762–791 (NGTTPLAIAKRLGYISVTDVLKVVTDETSV). Phosphoserine is present on Lys-55. The residue at position 101 (Asn-101) is a (3S)-3-hydroxyasparagine; by HIF1AN; partial. Asn-229 bears the (3S)-3-hydroxyasparagine; by HIF1AN mark. A Phosphoserine modification is found at Ser-425. 2 positions are modified to (3S)-3-hydroxyasparagine; by HIF1AN: Asn-427 and Asn-460. Residues Asn-625 and Asn-658 each carry the (3S)-3-hydroxyasparagine; by HIF1AN modification. Asp-691 carries the post-translational modification (3S)-3-hydroxyaspartate; by HIF1AN. Asn-724 carries the post-translational modification (3S)-3-hydroxyasparagine; by HIF1AN. Ser-755 bears the Phosphoserine mark. Asn-757 bears the (3S)-3-hydroxyasparagine; by HIF1AN mark. Phosphoserine occurs at positions 777, 813, 830, and 852. Positions 812-834 (VSEDEGDELVGSKAERRDSRDVG) are disordered. Positions 824–834 (KAERRDSRDVG) are enriched in basic and acidic residues. At Thr-862 the chain carries Phosphothreonine. The segment at 872 to 900 (DQEQASKEYDEDSLIPSSPATETSDNISP) is disordered. The segment covering 886-900 (IPSSPATETSDNISP) has biased composition (polar residues). ZU5 domains are found at residues 909–1064 (FLVS…IMSR) and 1066–1212 (CQDY…LSDC). The residue at position 957 (Thr-957) is a Phosphothreonine. Tyr-1069 bears the Phosphotyrosine mark. Ser-1078 bears the Phosphoserine mark. A UPA domain region spans residues 1197–1331 (ANFTTNVSAR…PVKVRDSSRE (135 aa)). Thr-1374 and Thr-1376 each carry phosphothreonine. A phosphoserine mark is found at Ser-1386 and Ser-1388. A 55 kDa regulatory domain region spans residues 1387-1862 (ESRLGFTSDT…KRASLKRGKQ (476 aa)). Position 1396 is a phosphothreonine (Thr-1396). Residues 1399–1483 (VEMRMAVIRE…EIVNMLEGSG (85 aa)) form the Death domain. Residues Ser-1424, Ser-1473, and Ser-1482 each carry the phosphoserine modification. Residues 1481 to 1506 (GSGRQSRNLKPERRHGDREYSLSPSQ) form a disordered region. Basic and acidic residues predominate over residues 1489-1500 (LKPERRHGDREY). A phosphoserine mark is found at Ser-1519, Ser-1529, and Ser-1612. Disordered stretches follow at residues 1598–1720 (EGAH…GPHS) and 1744–1767 (VSTREHVQRGPPETGSPKAGKEPS). A compositionally biased stretch (basic and acidic residues) spans 1637–1647 (EGQRSEKKRQE). Residues 1648 to 1666 (VSGTEQDTETEVSLVSGQQ) show a composition bias toward polar residues. Phosphoserine occurs at positions 1660, 1675, and 1685. Residues 1681–1694 (VLDRSQARTLDWDK) show a composition bias toward basic and acidic residues. Residues 1695-1720 (QGSTAVHPQEATQSSWQEEVTQGPHS) are compositionally biased toward polar residues.

As to quaternary structure, component of the ankyrin-1 complex in the erythrocyte, composed of ANK1, RHCE, RHAG, SLC4A1, EPB42, GYPA, GYPB and AQP1. Interacts with a number of integral membrane proteins and cytoskeletal proteins. Interacts (via N-terminus) with SPTB/spectrin (beta chain). Also interacts with TTN/titin. Isoform Mu17 interacts with OBSCN isoform 3/obscurin. Interacts with HIF1AN. Interacts (via ANK 1-5 repeats) with RHCE; this interaction mediates the primary membrane attachment site for ANK1. Interacts (via ANK 1-2 repeats) with AQP1 (via the N-terminal). Interacts (via ANK 1-13 repeats) with EPB42. Interacts directly with SLC4A1 (via the cytoplasmic domain); this interaction is mediated by the SLC4A1 Band 3-II and Band 3-III dimers. Regulated by phosphorylation. In terms of processing, acylated by palmitic acid group(s). Post-translationally, hydroxylated by HIF1AN at several asparagine and 1 aspartate residue within ANK repeat region; hydroxylation seems to increase the conformational stability of this region and may also modulate protein-protein interactions mediated by the ANK repeat region.

It localises to the cytoplasm. It is found in the cytoskeleton. Its subcellular location is the membrane. The protein resides in the sarcoplasmic reticulum. Its function is as follows. Component of the ankyrin-1 complex, a multiprotein complex involved in the stability and shape of the erythrocyte membrane. Attaches integral membrane proteins to cytoskeletal elements; binds to the erythrocyte membrane protein band 4.2, to Na-K ATPase, to the lymphocyte membrane protein GP85, and to the cytoskeletal proteins fodrin, tubulin, vimentin and desmin. Erythrocyte ankyrins also link spectrin (beta chain) to the cytoplasmic domain of the erythrocytes anion exchange protein; they retain most or all of these binding functions. The polypeptide is Ankyrin-1 (Mus musculus (Mouse)).